We begin with the raw amino-acid sequence, 62 residues long: UPF0337 protein XCC0070 (62 aa).

The interval 32 to 62 (LEGAAEKNIGKVQRKAGELADDVRDATKSTR) is disordered.

Belongs to the UPF0337 (CsbD) family.

The polypeptide is UPF0337 protein XCC0070 (Xanthomonas campestris pv. campestris (strain ATCC 33913 / DSM 3586 / NCPPB 528 / LMG 568 / P 25)).